The primary structure comprises 293 residues: Haloalkane dehalogenase (293 aa).

Residues 34-158 (PVLFLHGNPT…FQAFRTADVG (125 aa)) enclose the AB hydrolase-1 domain. The active-site Nucleophile is the Asp-106. Glu-130 (proton donor) is an active-site residue. His-272 (proton acceptor) is an active-site residue.

It belongs to the haloalkane dehalogenase family. Type 2 subfamily. Monomer.

The enzyme catalyses 1-haloalkane + H2O = a halide anion + a primary alcohol + H(+). It functions in the pathway xenobiotic degradation; haloalkane degradation. It participates in xenobiotic degradation; 1,3-dichloropropene degradation. Catalyzes hydrolytic cleavage of carbon-halogen bonds in halogenated aliphatic compounds, leading to the formation of the corresponding primary alcohols, halide ions and protons. Has a broad substrate specificity, as it is able to dehalogenate mono- and di- chlorinated and brominated alkanes (up to at least C10), and the two isomers of 1,3-dichloropropene to 3-chloroallyl alcohol; the highest activity was found with 1,2-dibromoethane, while no activity was observed with the analog 1,2-dichloroethane. This is Haloalkane dehalogenase (dhaA) from Pseudomonas pavonaceae.